Here is a 433-residue protein sequence, read N- to C-terminus: UPF0597 protein DNO_0106 (433 aa).

It belongs to the UPF0597 family.

The polypeptide is UPF0597 protein DNO_0106 (Dichelobacter nodosus (strain VCS1703A)).